The primary structure comprises 71 residues: DNA-directed RNA polymerase subunit epsilon (71 aa).

It belongs to the RNA polymerase subunit epsilon family. RNAP is composed of a core of 2 alpha, a beta and a beta' subunit. The core is associated with a delta subunit, and at least one of epsilon or omega. When a sigma factor is associated with the core the holoenzyme is formed, which can initiate transcription.

It catalyses the reaction RNA(n) + a ribonucleoside 5'-triphosphate = RNA(n+1) + diphosphate. In terms of biological role, a non-essential component of RNA polymerase (RNAP). This Geobacillus kaustophilus (strain HTA426) protein is DNA-directed RNA polymerase subunit epsilon.